The sequence spans 156 residues: Large ribosomal subunit protein uL15 (156 aa).

A disordered region spans residues 1-44 (MKLNELRDNPGASPKRTRVGRGPGSGKGKMGGRGIKGQKSRSGV). A compositionally biased stretch (gly residues) spans 21-35 (RGPGSGKGKMGGRGI).

The protein belongs to the universal ribosomal protein uL15 family. Part of the 50S ribosomal subunit.

Functionally, binds to the 23S rRNA. In Ruegeria sp. (strain TM1040) (Silicibacter sp.), this protein is Large ribosomal subunit protein uL15.